A 537-amino-acid polypeptide reads, in one-letter code: O-phosphoserine--tRNA(Cys) ligase (537 aa).

Residues 186-188 (HMT), 231-233 (SAS), 273-274 (YY), and N317 contribute to the substrate site.

Belongs to the class-II aminoacyl-tRNA synthetase family. O-phosphoseryl-tRNA(Cys) synthetase subfamily. In terms of assembly, homotetramer. Interacts with SepCysS.

The enzyme catalyses tRNA(Cys) + O-phospho-L-serine + ATP = O-phospho-L-seryl-tRNA(Cys) + AMP + diphosphate. In terms of biological role, catalyzes the attachment of O-phosphoserine (Sep) to tRNA(Cys). The polypeptide is O-phosphoserine--tRNA(Cys) ligase (Methanococcus maripaludis (strain C5 / ATCC BAA-1333)).